Consider the following 435-residue polypeptide: Adenylosuccinate synthetase (435 aa).

Residues 11–17 and 39–41 contribute to the GTP site; these read GDEGKGK and GHT. The active-site Proton acceptor is the Asp-12. Positions 12 and 39 each coordinate Mg(2+). Residues 12 to 15, 37 to 40, Thr-128, Arg-142, Gln-223, Thr-238, and Arg-302 contribute to the IMP site; these read DEGK and NAGH. His-40 acts as the Proton donor in catalysis. 298-304 contributes to the substrate binding site; sequence SVTGRPR. GTP is bound by residues Arg-304, 330–332, and 412–414; these read KLD and STG.

It belongs to the adenylosuccinate synthetase family. In terms of assembly, homodimer. Mg(2+) serves as cofactor.

The protein resides in the cytoplasm. The enzyme catalyses IMP + L-aspartate + GTP = N(6)-(1,2-dicarboxyethyl)-AMP + GDP + phosphate + 2 H(+). It functions in the pathway purine metabolism; AMP biosynthesis via de novo pathway; AMP from IMP: step 1/2. Its function is as follows. Plays an important role in the de novo pathway of purine nucleotide biosynthesis. Catalyzes the first committed step in the biosynthesis of AMP from IMP. This chain is Adenylosuccinate synthetase, found in Coxiella burnetii (strain RSA 493 / Nine Mile phase I).